Here is a 621-residue protein sequence, read N- to C-terminus: UvrABC system protein C (621 aa).

The region spanning 21–100 (AEPGVYLMRD…IKTYQPPYNV (80 aa)) is the GIY-YIG domain. Residues 210 to 245 (DELIRELKEKMAQAAQQENYEAAARYRDQIRGLEQL) enclose the UVR domain.

Belongs to the UvrC family. As to quaternary structure, interacts with UvrB in an incision complex.

Its subcellular location is the cytoplasm. The UvrABC repair system catalyzes the recognition and processing of DNA lesions. UvrC both incises the 5' and 3' sides of the lesion. The N-terminal half is responsible for the 3' incision and the C-terminal half is responsible for the 5' incision. This Synechococcus sp. (strain JA-3-3Ab) (Cyanobacteria bacterium Yellowstone A-Prime) protein is UvrABC system protein C.